A 207-amino-acid chain; its full sequence is Ras-related protein rab7 (207 aa).

Residues 15 to 22 (GDSGVGKT), 34 to 40 (SNQYKAT), 63 to 67 (DTAGQ), 125 to 128 (NKID), and 156 to 157 (AK) contribute to the GTP site. An Effector region motif is present at residues 37–45 (YKATIGADF). Residues Cys205 and Cys207 are each lipidated (S-geranylgeranyl cysteine). Cys207 is subject to Cysteine methyl ester.

Belongs to the small GTPase superfamily. Rab family. (Microbial infection) Interacts with Singapore grouper iridoviral proteins VP69 (ORF69) and VP101 (ORF101). Ubiquitously expressed. Expressed in liver, spleen, kidney, brain, intestine, heart, skin, muscle, gill and stomach.

The protein resides in the late endosome membrane. It localises to the lysosome membrane. In terms of biological role, key regulator in endo-lysosomal trafficking. Governs early-to-late endosomal maturation, microtubule minus-end as well as plus-end directed endosomal migration and positioning, and endosome-lysosome transport through different protein-protein interaction cascades. Plays important roles in microbial pathogen infection and survival, as well as in participating in the life cycle of viruses. The protein is Ras-related protein rab7 of Epinephelus coioides (Orange-spotted grouper).